We begin with the raw amino-acid sequence, 45 residues long: Thymosin beta-15A (45 aa).

Basic and acidic residues-rich tracts occupy residues 1–27 (MSDK…EEKN) and 35–45 (IQQEKECVQTS). The disordered stretch occupies residues 1-45 (MSDKPDLSEVEKFDRSKLKKTNTEEKNTLPSKETIQQEKECVQTS).

This sequence belongs to the thymosin beta family. Neuroblastoma-specific.

The protein resides in the cytoplasm. It localises to the cytoskeleton. Functionally, plays an important role in the organization of the cytoskeleton. Binds to and sequesters actin monomers (G actin) and therefore inhibits actin polymerization. The sequence is that of Thymosin beta-15A (TMSB15A) from Homo sapiens (Human).